The primary structure comprises 1132 residues: DNA-directed RNA polymerase subunit beta (1132 aa).

The protein belongs to the RNA polymerase beta chain family. In terms of assembly, the RNAP catalytic core consists of 2 alpha, 1 beta, 1 beta' and 1 omega subunit. When a sigma factor is associated with the core the holoenzyme is formed, which can initiate transcription.

It carries out the reaction RNA(n) + a ribonucleoside 5'-triphosphate = RNA(n+1) + diphosphate. Its function is as follows. DNA-dependent RNA polymerase catalyzes the transcription of DNA into RNA using the four ribonucleoside triphosphates as substrates. The polypeptide is DNA-directed RNA polymerase subunit beta (Carboxydothermus hydrogenoformans (strain ATCC BAA-161 / DSM 6008 / Z-2901)).